The sequence spans 156 residues: Small ribosomal subunit protein uS7 (156 aa).

This sequence belongs to the universal ribosomal protein uS7 family. In terms of assembly, part of the 30S ribosomal subunit. Contacts proteins S9 and S11.

In terms of biological role, one of the primary rRNA binding proteins, it binds directly to 16S rRNA where it nucleates assembly of the head domain of the 30S subunit. Is located at the subunit interface close to the decoding center, probably blocks exit of the E-site tRNA. The sequence is that of Small ribosomal subunit protein uS7 from Syntrophobacter fumaroxidans (strain DSM 10017 / MPOB).